A 220-amino-acid polypeptide reads, in one-letter code: Uracil-DNA glycosylase (220 aa).

The Proton acceptor role is filled by Asp65.

This sequence belongs to the uracil-DNA glycosylase (UDG) superfamily. UNG family.

The protein localises to the cytoplasm. It catalyses the reaction Hydrolyzes single-stranded DNA or mismatched double-stranded DNA and polynucleotides, releasing free uracil.. Excises uracil residues from the DNA which can arise as a result of misincorporation of dUMP residues by DNA polymerase or due to deamination of cytosine. This chain is Uracil-DNA glycosylase, found in Leuconostoc mesenteroides subsp. mesenteroides (strain ATCC 8293 / DSM 20343 / BCRC 11652 / CCM 1803 / JCM 6124 / NCDO 523 / NBRC 100496 / NCIMB 8023 / NCTC 12954 / NRRL B-1118 / 37Y).